We begin with the raw amino-acid sequence, 3225 residues long: Intermembrane lipid transfer protein VPS13 (3225 aa).

The tract at residues 1 to 1390 is involved in phospholipid binding; it reads MLEGLVAGLL…VFAADVEQHT (1390 aa). The region spanning 2 to 115 is the Chorein N-terminal domain; it reads LEGLVAGLLN…RHRLKMEKLD (114 aa). Disordered regions lie at residues 1568 to 1610 and 1768 to 1799; these read PEAP…QQLV and AGLK…SHSG. Over residues 1590–1610 the composition is skewed to low complexity; sequence VRVGSSGRHSESSAGSGQQLV. Over residues 1777–1799 the composition is skewed to polar residues; the sequence is GKGTSTLATRTRHASQSAASHSG. Positions 2290 to 2570 constitute an SHR-BD domain; sequence FKVTVYSPYV…PYAWDFPAAK (281 aa).

This sequence belongs to the VPS13 family.

Its subcellular location is the membrane. In terms of biological role, mediates the transfer of lipids between membranes at organelle contact sites. Binds phospholipids, including phosphatidylcholine (PC), phosphatidylethanolamine (PE), phosphatidic acid (PA), and phosphatidylserine (PS). May play a role in mitochondrial lipid homeostasis, Golgi vesicle transport, reticulophagy, actin cytoskeleton organization and formation of the prospore membrane. This is Intermembrane lipid transfer protein VPS13 from Chaetomium thermophilum (strain DSM 1495 / CBS 144.50 / IMI 039719) (Thermochaetoides thermophila).